We begin with the raw amino-acid sequence, 250 residues long: uncharacterized protein (250 aa).

Disordered stretches follow at residues 85–107 (NQFP…QSEP) and 158–198 (EPVP…AKVP). Over residues 167 to 176 (PAVEQPQVKQ) the composition is skewed to low complexity.

This is an uncharacterized protein from Mycoplasma pneumoniae (strain ATCC 29342 / M129 / Subtype 1) (Mycoplasmoides pneumoniae).